The sequence spans 723 residues: Fatty acid oxidation complex subunit alpha (723 aa).

An enoyl-CoA hydratase/isomerase region spans residues 1 to 189 (MIYQAETLQV…KIGLLDAVVD (189 aa)). D296 is a binding site for substrate. The segment at 311-723 (NKETQRAAVL…FYGAQQQGSI (413 aa)) is 3-hydroxyacyl-CoA dehydrogenase. Residues M325, D344, 401 to 403 (VVE), K408, and S430 each bind NAD(+). The For 3-hydroxyacyl-CoA dehydrogenase activity role is filled by H451. N454 lines the NAD(+) pocket. Substrate-binding residues include N501 and Y661.

It in the N-terminal section; belongs to the enoyl-CoA hydratase/isomerase family. The protein in the C-terminal section; belongs to the 3-hydroxyacyl-CoA dehydrogenase family. As to quaternary structure, heterotetramer of two alpha chains (FadB) and two beta chains (FadA).

The enzyme catalyses a (3S)-3-hydroxyacyl-CoA + NAD(+) = a 3-oxoacyl-CoA + NADH + H(+). It catalyses the reaction a (3S)-3-hydroxyacyl-CoA = a (2E)-enoyl-CoA + H2O. It carries out the reaction a 4-saturated-(3S)-3-hydroxyacyl-CoA = a (3E)-enoyl-CoA + H2O. The catalysed reaction is (3S)-3-hydroxybutanoyl-CoA = (3R)-3-hydroxybutanoyl-CoA. The enzyme catalyses a (3Z)-enoyl-CoA = a 4-saturated (2E)-enoyl-CoA. It catalyses the reaction a (3E)-enoyl-CoA = a 4-saturated (2E)-enoyl-CoA. The protein operates within lipid metabolism; fatty acid beta-oxidation. In terms of biological role, involved in the aerobic and anaerobic degradation of long-chain fatty acids via beta-oxidation cycle. Catalyzes the formation of 3-oxoacyl-CoA from enoyl-CoA via L-3-hydroxyacyl-CoA. It can also use D-3-hydroxyacyl-CoA and cis-3-enoyl-CoA as substrate. The chain is Fatty acid oxidation complex subunit alpha from Vibrio vulnificus (strain YJ016).